The following is a 574-amino-acid chain: Septation ring formation regulator EzrA (574 aa).

The Extracellular segment spans residues 1–7; the sequence is MSSGIIL. A helical transmembrane segment spans residues 8-26; it reads LLVAIVLLVIIAYVVGVVI. At 27–574 the chain is on the cytoplasmic side; the sequence is RKRNDTLIAN…YEKTQERIRF (548 aa). Coiled coils occupy residues 104–141, 275–343, and 473–525; these read VRAKHEIDNVDSQLTIIEEDIVSIREALEVLKEQEEKN, LVSL…SAKY, and DIEA…VQKS.

It belongs to the EzrA family.

It localises to the cell membrane. Its function is as follows. Negative regulator of FtsZ ring formation; modulates the frequency and position of FtsZ ring formation. Inhibits FtsZ ring formation at polar sites. Interacts either with FtsZ or with one of its binding partners to promote depolymerization. The sequence is that of Septation ring formation regulator EzrA from Streptococcus agalactiae serotype III (strain NEM316).